The primary structure comprises 434 residues: D-amino acid dehydrogenase (434 aa).

3–17 (VLVLGSGVIGTASAY) serves as a coordination point for FAD.

It belongs to the DadA oxidoreductase family. FAD is required as a cofactor.

The enzyme catalyses a D-alpha-amino acid + A + H2O = a 2-oxocarboxylate + AH2 + NH4(+). The protein operates within amino-acid degradation; D-alanine degradation; NH(3) and pyruvate from D-alanine: step 1/1. Its function is as follows. Oxidative deamination of D-amino acids. The polypeptide is D-amino acid dehydrogenase (Pseudomonas entomophila (strain L48)).